A 433-amino-acid polypeptide reads, in one-letter code: Enolase (433 aa).

Position 167 (Gln-167) interacts with (2R)-2-phosphoglycerate. The Proton donor role is filled by Glu-209. Asp-246, Glu-291, and Asp-318 together coordinate Mg(2+). The (2R)-2-phosphoglycerate site is built by Lys-343, Arg-372, Ser-373, and Lys-394. Lys-343 serves as the catalytic Proton acceptor.

The protein belongs to the enolase family. In terms of assembly, component of the RNA degradosome, a multiprotein complex involved in RNA processing and mRNA degradation. Mg(2+) is required as a cofactor.

The protein resides in the cytoplasm. The protein localises to the secreted. Its subcellular location is the cell surface. The enzyme catalyses (2R)-2-phosphoglycerate = phosphoenolpyruvate + H2O. The protein operates within carbohydrate degradation; glycolysis; pyruvate from D-glyceraldehyde 3-phosphate: step 4/5. In terms of biological role, catalyzes the reversible conversion of 2-phosphoglycerate (2-PG) into phosphoenolpyruvate (PEP). It is essential for the degradation of carbohydrates via glycolysis. The sequence is that of Enolase from Shewanella frigidimarina (strain NCIMB 400).